The primary structure comprises 427 residues: Glutamate-1-semialdehyde 2,1-aminomutase (427 aa).

Position 267 is an N6-(pyridoxal phosphate)lysine (Lys267).

This sequence belongs to the class-III pyridoxal-phosphate-dependent aminotransferase family. HemL subfamily. Homodimer. Pyridoxal 5'-phosphate is required as a cofactor.

The protein resides in the cytoplasm. The catalysed reaction is (S)-4-amino-5-oxopentanoate = 5-aminolevulinate. Its pathway is porphyrin-containing compound metabolism; protoporphyrin-IX biosynthesis; 5-aminolevulinate from L-glutamyl-tRNA(Glu): step 2/2. The polypeptide is Glutamate-1-semialdehyde 2,1-aminomutase (Geobacter metallireducens (strain ATCC 53774 / DSM 7210 / GS-15)).